We begin with the raw amino-acid sequence, 253 residues long: MVSSFTSAPRSGFYYFAQGWKLVSQPGIRRFVILPLLVNILLMGGAFWWLFTQLDVWIPTLMSYVPDWLQWLSYLLWPLAVISVLLVFGYFFSTIANWIAAPFNGLLAEQLEARLTGATPPDTGIFGIMKDVPRIMKREWQKFAWYLPRAIVLLILYFIPGIGQTVAPVLWFLFSAWMLAIQYCDYPFDNHKVPFKEMRIALRTRKITNMQFGALTSLFTMIPLLNLFIMPVAVCGATAMWVDCYRDKHAMWR.

Helical transmembrane passes span 31–51 (FVILPLLVNILLMGGAFWWLF), 75–95 (LLWPLAVISVLLVFGYFFSTI), 151–171 (IVLLILYFIPGIGQTVAPVLW), and 222–242 (IPLLNLFIMPVAVCGATAMWV).

It belongs to the CysZ family.

Its subcellular location is the cell inner membrane. Functionally, high affinity, high specificity proton-dependent sulfate transporter, which mediates sulfate uptake. Provides the sulfur source for the cysteine synthesis pathway. This is Sulfate transporter CysZ from Escherichia coli O7:K1 (strain IAI39 / ExPEC).